The sequence spans 410 residues: Multifunctional CCA protein (410 aa).

Positions 8 and 11 each coordinate ATP. CTP contacts are provided by Gly8 and Arg11. Mg(2+) is bound by residues Asp21 and Asp23. Residues Arg91, Arg137, and Arg140 each contribute to the ATP site. Arg91, Arg137, and Arg140 together coordinate CTP. In terms of domain architecture, HD spans 228 to 329; the sequence is TGVHVLSVLQ…LELLQSFDVY (102 aa).

The protein belongs to the tRNA nucleotidyltransferase/poly(A) polymerase family. Bacterial CCA-adding enzyme type 1 subfamily. Monomer. Can also form homodimers and oligomers. It depends on Mg(2+) as a cofactor. Requires Ni(2+) as cofactor.

It carries out the reaction a tRNA precursor + 2 CTP + ATP = a tRNA with a 3' CCA end + 3 diphosphate. The enzyme catalyses a tRNA with a 3' CCA end + 2 CTP + ATP = a tRNA with a 3' CCACCA end + 3 diphosphate. Functionally, catalyzes the addition and repair of the essential 3'-terminal CCA sequence in tRNAs without using a nucleic acid template. Adds these three nucleotides in the order of C, C, and A to the tRNA nucleotide-73, using CTP and ATP as substrates and producing inorganic pyrophosphate. tRNA 3'-terminal CCA addition is required both for tRNA processing and repair. Also involved in tRNA surveillance by mediating tandem CCA addition to generate a CCACCA at the 3' terminus of unstable tRNAs. While stable tRNAs receive only 3'-terminal CCA, unstable tRNAs are marked with CCACCA and rapidly degraded. The sequence is that of Multifunctional CCA protein from Pseudomonas aeruginosa (strain LESB58).